A 122-amino-acid polypeptide reads, in one-letter code: ATP-dependent Clp protease adapter protein ClpS (122 aa).

The protein belongs to the ClpS family. In terms of assembly, binds to the N-terminal domain of the chaperone ClpA.

Functionally, involved in the modulation of the specificity of the ClpAP-mediated ATP-dependent protein degradation. The protein is ATP-dependent Clp protease adapter protein ClpS of Pseudomonas fluorescens (strain SBW25).